The chain runs to 196 residues: Probable GTP-binding protein EngB (196 aa).

The 173-residue stretch at 24–196 (ELSEVALSGR…IWNLIEPYIS (173 aa)) folds into the EngB-type G domain. GTP contacts are provided by residues 32–39 (GRSNVGKS), 59–63 (GKTQT), 77–80 (DVPG), 144–147 (TKED), and 176–178 (YSS). Residues serine 39 and threonine 61 each contribute to the Mg(2+) site.

Belongs to the TRAFAC class TrmE-Era-EngA-EngB-Septin-like GTPase superfamily. EngB GTPase family. Mg(2+) is required as a cofactor.

Its function is as follows. Necessary for normal cell division and for the maintenance of normal septation. The chain is Probable GTP-binding protein EngB from Staphylococcus aureus (strain MW2).